The primary structure comprises 588 residues: Intracellular maltogenic amylase (588 aa).

Positions 149, 155, 174, and 176 each coordinate Ca(2+). Positions 249 and 325 each coordinate substrate. Residue aspartate 327 is the Nucleophile of the active site. Glutamate 356 functions as the Proton donor in the catalytic mechanism. Substrate contacts are provided by residues 422-423 (HD), aspartate 467, and arginine 471.

It belongs to the glycosyl hydrolase 13 family. BbmA subfamily. In terms of assembly, monomer or homodimer; in equilibrium. The cofactor is Ca(2+).

Its subcellular location is the cytoplasm. Functionally, hydrolyzes beta-cyclodextrin to maltose and glucose, soluble starch to maltose and glucose, and pullulan to panose with trace amounts of maltose and glucose. It is also able to hydrolyze acarbose. Can also exhibit a transglycosylation activity transferring glucose or maltose to another moiety of sugars by forming alpha-(1,6)- and alpha-(1,3)-glycosidic linkages upon the hydrolysis of substrate at concentrations of 5% or higher. This is Intracellular maltogenic amylase (bbmA) from Bacillus subtilis.